A 178-amino-acid polypeptide reads, in one-letter code: Transcription termination/antitermination protein NusG (178 aa).

The region spanning 130–159 (SVKVKEGPFANFIGTIEEIQLDKRKLKVHV) is the KOW domain.

It belongs to the NusG family.

Participates in transcription elongation, termination and antitermination. This Halalkalibacterium halodurans (strain ATCC BAA-125 / DSM 18197 / FERM 7344 / JCM 9153 / C-125) (Bacillus halodurans) protein is Transcription termination/antitermination protein NusG.